We begin with the raw amino-acid sequence, 210 residues long: Imidazole glycerol phosphate synthase subunit HisH (210 aa).

Residues 3–210 form the Glutamine amidotransferase type-1 domain; that stretch reads TIAIIDYGMG…ILKNFALSKA (208 aa). Catalysis depends on C81, which acts as the Nucleophile. Catalysis depends on residues H190 and E192.

In terms of assembly, heterodimer of HisH and HisF.

It localises to the cytoplasm. The catalysed reaction is 5-[(5-phospho-1-deoxy-D-ribulos-1-ylimino)methylamino]-1-(5-phospho-beta-D-ribosyl)imidazole-4-carboxamide + L-glutamine = D-erythro-1-(imidazol-4-yl)glycerol 3-phosphate + 5-amino-1-(5-phospho-beta-D-ribosyl)imidazole-4-carboxamide + L-glutamate + H(+). The enzyme catalyses L-glutamine + H2O = L-glutamate + NH4(+). It participates in amino-acid biosynthesis; L-histidine biosynthesis; L-histidine from 5-phospho-alpha-D-ribose 1-diphosphate: step 5/9. Its function is as follows. IGPS catalyzes the conversion of PRFAR and glutamine to IGP, AICAR and glutamate. The HisH subunit catalyzes the hydrolysis of glutamine to glutamate and ammonia as part of the synthesis of IGP and AICAR. The resulting ammonia molecule is channeled to the active site of HisF. The chain is Imidazole glycerol phosphate synthase subunit HisH from Geobacter metallireducens (strain ATCC 53774 / DSM 7210 / GS-15).